Consider the following 161-residue polypeptide: Nucleotide-binding protein xcc-b100_3818 (161 aa).

Belongs to the YajQ family.

Its function is as follows. Nucleotide-binding protein. This is Nucleotide-binding protein xcc-b100_3818 from Xanthomonas campestris pv. campestris (strain B100).